We begin with the raw amino-acid sequence, 300 residues long: D-alanine--D-alanine ligase (300 aa).

One can recognise an ATP-grasp domain in the interval 99–293; that stretch reads KKILKYANIN…FAELLNSIVK (195 aa). 126 to 181 lines the ATP pocket; sequence IEKIGYPVFVKPNSGGSSVATNLVKDKEGIKEAVELALKYDKEVMIENYTKGEEIT. Mg(2+)-binding residues include D248, E260, and N262.

This sequence belongs to the D-alanine--D-alanine ligase family. Mg(2+) serves as cofactor. The cofactor is Mn(2+).

The protein localises to the cytoplasm. The catalysed reaction is 2 D-alanine + ATP = D-alanyl-D-alanine + ADP + phosphate + H(+). It functions in the pathway cell wall biogenesis; peptidoglycan biosynthesis. Cell wall formation. This is D-alanine--D-alanine ligase from Clostridium botulinum (strain ATCC 19397 / Type A).